A 489-amino-acid chain; its full sequence is Tyrosine-protein phosphatase MSG5 (489 aa).

Residues 1-18 are compositionally biased toward basic and acidic residues; sequence MQFHSDKQHLDSKTDIDF. The disordered stretch occupies residues 1-30; the sequence is MQFHSDKQHLDSKTDIDFKPNSPRSLQNRN. Phosphoserine is present on residues Ser-22, Ser-98, and Ser-151. Thr-178 carries the post-translational modification Phosphothreonine. A Tyrosine-protein phosphatase domain is found at 233 to 375; the sequence is GPLLVLPPNL…LMEWGTMLSK (143 aa). Residue Cys-319 is the Phosphocysteine intermediate of the active site. Disordered regions lie at residues 375-401 and 419-489; these read KNSPGEEGETVHMPEEDDIGNNEVSST and LSSS…MFLP. Positions 419–450 are enriched in low complexity; that stretch reads LSSSPNDSSVNSSEVTPRTPATLTGARTALAT. A compositionally biased stretch (basic and acidic residues) spans 451–460; the sequence is ERGEDDEHCK.

This sequence belongs to the protein-tyrosine phosphatase family. Non-receptor class dual specificity subfamily.

The enzyme catalyses O-phospho-L-tyrosyl-[protein] + H2O = L-tyrosyl-[protein] + phosphate. In terms of biological role, dual specificity phosphatase that dephosphorylates MAP kinase FUS3 on both a Tyr and a Ser or Thr. Has a role in adaptation to pheromone. This is Tyrosine-protein phosphatase MSG5 (MSG5) from Saccharomyces cerevisiae (strain ATCC 204508 / S288c) (Baker's yeast).